The following is a 1070-amino-acid chain: DNA-directed RNA polymerase subunit beta (1070 aa).

The protein belongs to the RNA polymerase beta chain family. In terms of assembly, in plastids the minimal PEP RNA polymerase catalytic core is composed of four subunits: alpha, beta, beta', and beta''. When a (nuclear-encoded) sigma factor is associated with the core the holoenzyme is formed, which can initiate transcription.

The protein resides in the plastid. It localises to the chloroplast. It catalyses the reaction RNA(n) + a ribonucleoside 5'-triphosphate = RNA(n+1) + diphosphate. Its function is as follows. DNA-dependent RNA polymerase catalyzes the transcription of DNA into RNA using the four ribonucleoside triphosphates as substrates. The polypeptide is DNA-directed RNA polymerase subunit beta (Gossypium hirsutum (Upland cotton)).